The chain runs to 204 residues: GTP cyclohydrolase 1 (204 aa).

The Zn(2+) site is built by Cys92, His95, and Cys165.

This sequence belongs to the GTP cyclohydrolase I family. As to quaternary structure, homomer.

It carries out the reaction GTP + H2O = 7,8-dihydroneopterin 3'-triphosphate + formate + H(+). It functions in the pathway cofactor biosynthesis; 7,8-dihydroneopterin triphosphate biosynthesis; 7,8-dihydroneopterin triphosphate from GTP: step 1/1. The chain is GTP cyclohydrolase 1 from Mycobacteroides abscessus (strain ATCC 19977 / DSM 44196 / CCUG 20993 / CIP 104536 / JCM 13569 / NCTC 13031 / TMC 1543 / L948) (Mycobacterium abscessus).